A 230-amino-acid polypeptide reads, in one-letter code: 2,3-bisphosphoglycerate-dependent phosphoglycerate mutase (230 aa).

Residues 10-17 (RHGQSKWN), 23-24 (TG), arginine 62, 89-92 (ERHY), lysine 100, 116-117 (RR), and 185-186 (GN) contribute to the substrate site. Histidine 11 acts as the Tele-phosphohistidine intermediate in catalysis. Glutamate 89 functions as the Proton donor/acceptor in the catalytic mechanism.

This sequence belongs to the phosphoglycerate mutase family. BPG-dependent PGAM subfamily. In terms of assembly, homodimer.

It carries out the reaction (2R)-2-phosphoglycerate = (2R)-3-phosphoglycerate. The protein operates within carbohydrate degradation; glycolysis; pyruvate from D-glyceraldehyde 3-phosphate: step 3/5. In terms of biological role, catalyzes the interconversion of 2-phosphoglycerate and 3-phosphoglycerate. The polypeptide is 2,3-bisphosphoglycerate-dependent phosphoglycerate mutase (Buchnera aphidicola subsp. Schizaphis graminum (strain Sg)).